A 457-amino-acid polypeptide reads, in one-letter code: tRNA-2-methylthio-N(6)-dimethylallyladenosine synthase (457 aa).

Residues 3–120 form the MTTase N-terminal domain; sequence KKVYIKTFGC…LPQMIDQRRA (118 aa). The [4Fe-4S] cluster site is built by Cys12, Cys49, Cys83, Cys157, Cys161, and Cys164. In terms of domain architecture, Radical SAM core spans 143–377; that stretch reads RVEGPSAFVS…QATIEENVAR (235 aa). The 68-residue stretch at 380–447 folds into the TRAM domain; that stretch reads RSMVGKVERI…PHSLRGELLL (68 aa).

This sequence belongs to the methylthiotransferase family. MiaB subfamily. As to quaternary structure, monomer. It depends on [4Fe-4S] cluster as a cofactor.

It is found in the cytoplasm. The catalysed reaction is N(6)-dimethylallyladenosine(37) in tRNA + (sulfur carrier)-SH + AH2 + 2 S-adenosyl-L-methionine = 2-methylsulfanyl-N(6)-dimethylallyladenosine(37) in tRNA + (sulfur carrier)-H + 5'-deoxyadenosine + L-methionine + A + S-adenosyl-L-homocysteine + 2 H(+). Its function is as follows. Catalyzes the methylthiolation of N6-(dimethylallyl)adenosine (i(6)A), leading to the formation of 2-methylthio-N6-(dimethylallyl)adenosine (ms(2)i(6)A) at position 37 in tRNAs that read codons beginning with uridine. This Burkholderia ambifaria (strain MC40-6) protein is tRNA-2-methylthio-N(6)-dimethylallyladenosine synthase.